Reading from the N-terminus, the 74-residue chain is Conotoxin AbVIH (74 aa).

A signal peptide spans 1–17 (VLIIAVLFLTACQLTTA). A propeptide spanning residues 18 to 40 (ETSSRGKQKHRALRSTDKDSRMT) is cleaved from the precursor. A disordered region spans residues 19–40 (TSSRGKQKHRALRSTDKDSRMT). Cystine bridges form between C43/C57, C50/C61, and C56/C68.

This sequence belongs to the conotoxin O1 superfamily. Expressed by the venom duct.

The protein resides in the secreted. This Conus abbreviatus (Abbreviated cone) protein is Conotoxin AbVIH.